The primary structure comprises 872 residues: Alanine--tRNA ligase (872 aa).

Zn(2+)-binding residues include His563, His567, Cys665, and His669.

It belongs to the class-II aminoacyl-tRNA synthetase family. Requires Zn(2+) as cofactor.

It localises to the cytoplasm. It catalyses the reaction tRNA(Ala) + L-alanine + ATP = L-alanyl-tRNA(Ala) + AMP + diphosphate. Its function is as follows. Catalyzes the attachment of alanine to tRNA(Ala) in a two-step reaction: alanine is first activated by ATP to form Ala-AMP and then transferred to the acceptor end of tRNA(Ala). Also edits incorrectly charged Ser-tRNA(Ala) and Gly-tRNA(Ala) via its editing domain. The sequence is that of Alanine--tRNA ligase from Bacteroides fragilis (strain YCH46).